The sequence spans 411 residues: Carbamoyl phosphate synthase arginine-specific small chain (411 aa).

Residues Ser50, Gly232, and Gly234 each coordinate L-glutamine. In terms of domain architecture, Glutamine amidotransferase type-1 spans 185–376; sequence NVALIDCGVK…FDNIEKYQLQ (192 aa). Cys264 functions as the Nucleophile in the catalytic mechanism. The L-glutamine site is built by Leu265, Gln268, Asn306, Gly308, and Tyr309. Residues His349 and Glu351 contribute to the active site.

Belongs to the CarA family. As to quaternary structure, heterodimer composed of 2 chains; the small (or glutamine) chain promotes the hydrolysis of glutamine to ammonia, which is used by the large (or ammonia) chain to synthesize carbamoyl phosphate.

It localises to the cytoplasm. It catalyses the reaction hydrogencarbonate + L-glutamine + 2 ATP + H2O = carbamoyl phosphate + L-glutamate + 2 ADP + phosphate + 2 H(+). The enzyme catalyses L-glutamine + H2O = L-glutamate + NH4(+). It participates in amino-acid biosynthesis; L-arginine biosynthesis; carbamoyl phosphate from bicarbonate: step 1/1. Its function is as follows. Small subunit of the arginine-specific carbamoyl phosphate synthase (CPSase). CPSase catalyzes the formation of carbamoyl phosphate from the ammonia moiety of glutamine, carbonate, and phosphate donated by ATP, constituting the first step of 2 biosynthetic pathways, one leading to arginine and/or urea and the other to pyrimidine nucleotides. The small subunit (glutamine amidotransferase) binds and cleaves glutamine to supply the large subunit with the substrate ammonia. This chain is Carbamoyl phosphate synthase arginine-specific small chain (CPA1), found in Saccharomyces cerevisiae (strain ATCC 204508 / S288c) (Baker's yeast).